The primary structure comprises 110 residues: Protein YcgL (110 aa).

In terms of domain architecture, YcgL spans 14 to 98; the sequence is MFCVIYRSSK…PPEDLLKQHL (85 aa).

In Salmonella arizonae (strain ATCC BAA-731 / CDC346-86 / RSK2980), this protein is Protein YcgL.